The chain runs to 618 residues: Protein polyglycylase TTLL10 (618 aa).

Residues 1–76 are disordered; sequence MGSSQEEGLP…GLLLGDGKPS (76 aa). A compositionally biased stretch (low complexity) spans 57 to 74; it reads ATGPPAALLEGLLLGDGK. One can recognise a TTL domain in the interval 82–479; it reads PGPFFYIGGN…TFQKSLRGQK (398 aa). ATP is bound by residues Lys240, 246-247, 289-292, 302-304, and 345-346; these read QG, QRYI, KFD, and TN. Gln246 contributes to the a protein binding site. Positions 425, 438, and 440 each coordinate Mg(2+). The segment at 503–618 is disordered; that stretch reads LGGSCSLRRR…PATLPAFRDL (116 aa). Pro residues predominate over residues 539-557; sequence PVPPPLAPQRPQLPGPSPD. Positions 585 to 594 are enriched in basic and acidic residues; it reads AKEEREEPEN.

The cofactor is Mg(2+).

The protein localises to the cytoplasm. It is found in the cytoskeleton. Its subcellular location is the cell projection. It localises to the cilium. The protein resides in the cilium axoneme. It carries out the reaction (glycyl)(n)-glycyl-L-glutamyl-[protein] + glycine + ATP = (glycyl)(n+1)-glycyl-L-glutamyl-[protein] + ADP + phosphate + H(+). Its function is as follows. Polyglycylase which modifies both tubulin and non-tubulin proteins, generating polyglycine side chains of variable lengths on the gamma-carboxyl groups of specific glutamate residues of target proteins. Involved in the elongation step rather than the initiation step of the polyglycylation reaction. Polyglycylates alpha-tubulin and beta-tubulin. Polyglycylates non-tubulin proteins such as nucleosome assembly protein NAP1. The polypeptide is Protein polyglycylase TTLL10 (TTLL10) (Macaca fascicularis (Crab-eating macaque)).